The following is a 379-amino-acid chain: Carbamoyl phosphate synthase small chain (379 aa).

A CPSase region spans residues 1-189 (MSKLALLVLE…GLPEAKDDSE (189 aa)). Serine 47, glycine 241, and glycine 243 together coordinate L-glutamine. The region spanning 193 to 379 (HVVAYDFGAK…FIELIKKHSA (187 aa)) is the Glutamine amidotransferase type-1 domain. Cysteine 269 serves as the catalytic Nucleophile. Residues leucine 270, glutamine 273, asparagine 311, glycine 313, and phenylalanine 314 each contribute to the L-glutamine site. Active-site residues include histidine 353 and glutamate 355.

It belongs to the CarA family. In terms of assembly, composed of two chains; the small (or glutamine) chain promotes the hydrolysis of glutamine to ammonia, which is used by the large (or ammonia) chain to synthesize carbamoyl phosphate. Tetramer of heterodimers (alpha,beta)4.

The catalysed reaction is hydrogencarbonate + L-glutamine + 2 ATP + H2O = carbamoyl phosphate + L-glutamate + 2 ADP + phosphate + 2 H(+). The enzyme catalyses L-glutamine + H2O = L-glutamate + NH4(+). It participates in amino-acid biosynthesis; L-arginine biosynthesis; carbamoyl phosphate from bicarbonate: step 1/1. It functions in the pathway pyrimidine metabolism; UMP biosynthesis via de novo pathway; (S)-dihydroorotate from bicarbonate: step 1/3. Its function is as follows. Small subunit of the glutamine-dependent carbamoyl phosphate synthetase (CPSase). CPSase catalyzes the formation of carbamoyl phosphate from the ammonia moiety of glutamine, carbonate, and phosphate donated by ATP, constituting the first step of 2 biosynthetic pathways, one leading to arginine and/or urea and the other to pyrimidine nucleotides. The small subunit (glutamine amidotransferase) binds and cleaves glutamine to supply the large subunit with the substrate ammonia. The chain is Carbamoyl phosphate synthase small chain from Vibrio parahaemolyticus serotype O3:K6 (strain RIMD 2210633).